A 417-amino-acid chain; its full sequence is Serine hydroxymethyltransferase 1 (417 aa).

Residues leucine 121 and 125-127 (GHL) contribute to the (6S)-5,6,7,8-tetrahydrofolate site. Residue lysine 230 is modified to N6-(pyridoxal phosphate)lysine. Position 355–357 (355–357 (SPF)) interacts with (6S)-5,6,7,8-tetrahydrofolate.

It belongs to the SHMT family. Homodimer. Requires pyridoxal 5'-phosphate as cofactor.

Its subcellular location is the cytoplasm. The catalysed reaction is (6R)-5,10-methylene-5,6,7,8-tetrahydrofolate + glycine + H2O = (6S)-5,6,7,8-tetrahydrofolate + L-serine. The protein operates within one-carbon metabolism; tetrahydrofolate interconversion. Its pathway is amino-acid biosynthesis; glycine biosynthesis; glycine from L-serine: step 1/1. Its function is as follows. Catalyzes the reversible interconversion of serine and glycine with tetrahydrofolate (THF) serving as the one-carbon carrier. This reaction serves as the major source of one-carbon groups required for the biosynthesis of purines, thymidylate, methionine, and other important biomolecules. Also exhibits THF-independent aldolase activity toward beta-hydroxyamino acids, producing glycine and aldehydes, via a retro-aldol mechanism. This Pseudomonas syringae pv. tomato (strain ATCC BAA-871 / DC3000) protein is Serine hydroxymethyltransferase 1.